The chain runs to 156 residues: Ribosomal RNA large subunit methyltransferase H (156 aa).

S-adenosyl-L-methionine-binding positions include Leu-73, Gly-104, and 123 to 128 (LSALTL).

Belongs to the RNA methyltransferase RlmH family. Homodimer.

The protein resides in the cytoplasm. It catalyses the reaction pseudouridine(1915) in 23S rRNA + S-adenosyl-L-methionine = N(3)-methylpseudouridine(1915) in 23S rRNA + S-adenosyl-L-homocysteine + H(+). Functionally, specifically methylates the pseudouridine at position 1915 (m3Psi1915) in 23S rRNA. The polypeptide is Ribosomal RNA large subunit methyltransferase H (Vibrio vulnificus (strain CMCP6)).